The sequence spans 54 residues: Ovomucoid (54 aa).

Positions 4–54 constitute a Kazal-like domain; sequence VDCSDYPKPVCSLEDMPLCGSDSKTYSNKCNFCNAVVDSNGTLTLSHFGKC. Cystine bridges form between cysteine 6-cysteine 36, cysteine 14-cysteine 33, and cysteine 22-cysteine 54. A glycan (N-linked (GlcNAc...) asparagine) is linked at asparagine 43.

It localises to the secreted. This Vultur gryphus (Andean condor) protein is Ovomucoid.